The sequence spans 285 residues: Bifunctional protein FolD (285 aa).

NADP(+)-binding positions include G165–G167, T192, and V233.

The protein belongs to the tetrahydrofolate dehydrogenase/cyclohydrolase family. Homodimer.

It carries out the reaction (6R)-5,10-methylene-5,6,7,8-tetrahydrofolate + NADP(+) = (6R)-5,10-methenyltetrahydrofolate + NADPH. It catalyses the reaction (6R)-5,10-methenyltetrahydrofolate + H2O = (6R)-10-formyltetrahydrofolate + H(+). It functions in the pathway one-carbon metabolism; tetrahydrofolate interconversion. Catalyzes the oxidation of 5,10-methylenetetrahydrofolate to 5,10-methenyltetrahydrofolate and then the hydrolysis of 5,10-methenyltetrahydrofolate to 10-formyltetrahydrofolate. The chain is Bifunctional protein FolD from Mycobacterium sp. (strain MCS).